Consider the following 263-residue polypeptide: Cysteine-rich repeat secretory protein 55 (263 aa).

The signal sequence occupies residues 1–20; it reads MKTLVVKCFLLLALVCSCRA. 2 consecutive Gnk2-homologous domains span residues 22–126 and 132–240; these read DSIW…QENF and TGAG…FYPF.

The protein belongs to the cysteine-rich repeat secretory protein family.

The protein localises to the secreted. This is Cysteine-rich repeat secretory protein 55 (CRRSP55) from Arabidopsis thaliana (Mouse-ear cress).